The sequence spans 954 residues: Glycine dehydrogenase (decarboxylating) (954 aa).

Lys704 carries the N6-(pyridoxal phosphate)lysine modification.

Belongs to the GcvP family. The glycine cleavage system is composed of four proteins: P, T, L and H. Pyridoxal 5'-phosphate is required as a cofactor.

It carries out the reaction N(6)-[(R)-lipoyl]-L-lysyl-[glycine-cleavage complex H protein] + glycine + H(+) = N(6)-[(R)-S(8)-aminomethyldihydrolipoyl]-L-lysyl-[glycine-cleavage complex H protein] + CO2. Functionally, the glycine cleavage system catalyzes the degradation of glycine. The P protein binds the alpha-amino group of glycine through its pyridoxal phosphate cofactor; CO(2) is released and the remaining methylamine moiety is then transferred to the lipoamide cofactor of the H protein. In Rhizobium leguminosarum bv. trifolii (strain WSM2304), this protein is Glycine dehydrogenase (decarboxylating).